We begin with the raw amino-acid sequence, 343 residues long: GTPase Obg (343 aa).

An Obg domain is found at 1-159 (MKFVDSASIF…LQLDMELKLM (159 aa)). Residues 121–144 (GHGGRGNQHFATSTNQAPRRSEPG) are disordered. A compositionally biased stretch (polar residues) spans 129-138 (HFATSTNQAP). Positions 160 to 323 (ADVGLVGFPN…LKDELWREVS (164 aa)) constitute an OBG-type G domain. Residues 166 to 173 (GFPNAGKS), 191 to 195 (FTTLV), 213 to 216 (DIPG), 280 to 283 (TKMD), and 304 to 306 (SSV) each bind GTP. 2 residues coordinate Mg(2+): Ser-173 and Thr-193. Residues 322–343 (VSMRDRPEESSDPEGEGDGGTP) are disordered. Residues 331 to 343 (SSDPEGEGDGGTP) are compositionally biased toward acidic residues.

Belongs to the TRAFAC class OBG-HflX-like GTPase superfamily. OBG GTPase family. As to quaternary structure, monomer. Mg(2+) is required as a cofactor.

It is found in the cytoplasm. In terms of biological role, an essential GTPase which binds GTP, GDP and possibly (p)ppGpp with moderate affinity, with high nucleotide exchange rates and a fairly low GTP hydrolysis rate. Plays a role in control of the cell cycle, stress response, ribosome biogenesis and in those bacteria that undergo differentiation, in morphogenesis control. This is GTPase Obg from Chlorobium luteolum (strain DSM 273 / BCRC 81028 / 2530) (Pelodictyon luteolum).